Consider the following 260-residue polypeptide: 5-oxoprolinase subunit A 2 (260 aa).

The protein belongs to the LamB/PxpA family. Forms a complex composed of PxpA, PxpB and PxpC.

It catalyses the reaction 5-oxo-L-proline + ATP + 2 H2O = L-glutamate + ADP + phosphate + H(+). Catalyzes the cleavage of 5-oxoproline to form L-glutamate coupled to the hydrolysis of ATP to ADP and inorganic phosphate. The protein is 5-oxoprolinase subunit A 2 of Ralstonia nicotianae (strain ATCC BAA-1114 / GMI1000) (Ralstonia solanacearum).